Consider the following 599-residue polypeptide: Elongation factor 4 (599 aa).

The tr-type G domain maps to 5 to 187 (SHIRNFSIIA…RLVAVIPPPT (183 aa)). GTP is bound by residues 17–22 (DHGKST) and 134–137 (NKMD).

It belongs to the TRAFAC class translation factor GTPase superfamily. Classic translation factor GTPase family. LepA subfamily.

It localises to the cell inner membrane. It catalyses the reaction GTP + H2O = GDP + phosphate + H(+). Required for accurate and efficient protein synthesis under certain stress conditions. May act as a fidelity factor of the translation reaction, by catalyzing a one-codon backward translocation of tRNAs on improperly translocated ribosomes. Back-translocation proceeds from a post-translocation (POST) complex to a pre-translocation (PRE) complex, thus giving elongation factor G a second chance to translocate the tRNAs correctly. Binds to ribosomes in a GTP-dependent manner. The polypeptide is Elongation factor 4 (Stutzerimonas stutzeri (strain A1501) (Pseudomonas stutzeri)).